We begin with the raw amino-acid sequence, 645 residues long: DNA mismatch repair protein MutL (645 aa).

A disordered region spans residues 371–403; it reads VHDQKDKNHDVESHKNNLDSTSSTNNESTEVSN. Residues 372–387 show a composition bias toward basic and acidic residues; that stretch reads HDQKDKNHDVESHKNN. Residues 390–402 show a composition bias toward low complexity; sequence STSSTNNESTEVS.

It belongs to the DNA mismatch repair MutL/HexB family.

Its function is as follows. This protein is involved in the repair of mismatches in DNA. It is required for dam-dependent methyl-directed DNA mismatch repair. May act as a 'molecular matchmaker', a protein that promotes the formation of a stable complex between two or more DNA-binding proteins in an ATP-dependent manner without itself being part of a final effector complex. This Staphylococcus epidermidis (strain ATCC 35984 / DSM 28319 / BCRC 17069 / CCUG 31568 / BM 3577 / RP62A) protein is DNA mismatch repair protein MutL.